The sequence spans 2474 residues: Serine/threonine-protein kinase TOR2 (2474 aa).

Residues 1 to 62 (MNKYINKYTT…NGPNDSGRVI (62 aa)) form a disordered region. Phosphothreonine is present on threonine 10. Basic residues predominate over residues 25 to 36 (HRTRKKLTHKSH). Polar residues predominate over residues 43-56 (STTSNTDSNHNGPN). HEAT repeat units follow at residues 588-626 (YSLT…KDDI), 636-674 (HSVS…PQLA), 676-710 (PDNL…VNPA), 756-793 (PYID…VGGK), 797-835 (RYLK…SSGY), 841-879 (LDYP…LDPY), 917-955 (YYPT…NLGL), 1039-1076 (RFVP…FGPN), 1079-1116 (DYSH…NINL), 1118-1155 (EMSS…QLGT), and 1292-1331 (SYQE…DDKP). The 585-residue stretch at 1338 to 1922 (TLGKYAQKCH…VYPLMVAIKS (585 aa)) folds into the FAT domain. Positions 2097-2421 (FEPVFSVISS…EHKNAIRNAR (325 aa)) constitute a PI3K/PI4K catalytic domain. The interval 2103–2109 (VISSKQR) is G-loop. Positions 2276-2284 (GLGDRHPSN) are catalytic loop. The activation loop stretch occupies residues 2296-2321 (HIDFGDCFEAAILREKFPEKVPFRLT). An FATC domain is found at 2442–2474 (NDLDVPEQVDKLIQQATSVENLCQHYIGWCPFW).

The protein belongs to the PI3/PI4-kinase family. In terms of assembly, the target of rapamycin complex 1 (TORC1) is composed of at least KOG1, LST8, TCO89 and either TOR1 (TORC1-A) or TOR2 (TORC1-B). TORC1 binds to and is inhibited by FKBP-rapamycin. Interacts with PIB2; following activation of PIB2 by glutamine. The target of rapamycin complex 2 (TORC2) is composed of at least AVO1, AVO2, BIT61, LST8, TOR2 and TSC11. TORC2 forms a homodimer. Contrary to TORC1, TORC2 does not bind to and is not sensitive to FKBP-rapamycin. Interacts with SLM1 and SLM2.

The protein localises to the cell membrane. It is found in the vacuole membrane. It carries out the reaction L-seryl-[protein] + ATP = O-phospho-L-seryl-[protein] + ADP + H(+). It catalyses the reaction L-threonyl-[protein] + ATP = O-phospho-L-threonyl-[protein] + ADP + H(+). The enzyme catalyses a 1,2-diacyl-sn-glycero-3-phospho-(1D-myo-inositol) + ATP = a 1,2-diacyl-sn-glycero-3-phospho-(1D-myo-inositol 4-phosphate) + ADP + H(+). Its function is as follows. Phosphatidylinositol 3-kinase homolog, component of both TORC1 and TORC2. TORC1 regulates multiple cellular processes to control cell growth in response to environmental signals. Nutrient limitation and environmental stress signals cause inactivation of TORC1. Active TORC1 positively controls ribosome biogenesis via control of rRNA, ribosomal protein and tRNA gene expression, and rRNA processing. TORC1 positively controls protein biosynthesis by regulation of mRNA stability, translation initiation factor activity, and high-affinity amino acid permeases that serve to provide amino acids for use by the translation machinery. TORC1 also promotes growth by sequestering a number of nutrient and general stress-responsive transcription factors in the cytoplasm. TORC1 negatively controls macroautophagy, a process to recycle surplus cytoplasmic mass under nutrient starvation conditions. TORC1 controls many of these processes via TIP41-TAP42-mediated inhibition of the type 2A-related phosphatases PP2A and SIT4. In nutrient-rich conditions, responsible for the phosphorylation of AGC S6 kinase (S6K) YPK3, activating YPK3 kinase activity and promoting phosphorylation of ribosomal protein S6. Phosphorylates kinase SCH9 at 6 amino acids in the C-terminus, activating SCH9 kinase activity to properly regulate ribosome biogenesis, translation initiation, and entry into stationary phase. TORC2 regulates cell cycle-dependent polarization of the actin-cytoskeleton, cell wall integrity, and receptor endocytosis. TORC2 controls polarity of the actin cytoskeleton, which is required for orienting the secretory pathway toward discrete growth sites, via the RHO1/PKC1/MAPK cell integrity pathway by activating the RHO1 guanine nucleotide exchange factor ROM2. TORC2 phosphorylates the AGC kinase YPK2, an upstream effector of the cell integrity pathway. TORC2 negatively regulates calcineurin-dependent stress signaling via phosphorylation of its effector SLM1-SLM2. The polypeptide is Serine/threonine-protein kinase TOR2 (TOR2) (Saccharomyces cerevisiae (strain ATCC 204508 / S288c) (Baker's yeast)).